Here is a 609-residue protein sequence, read N- to C-terminus: Alpha-fetoprotein (609 aa).

Positions Met1–Ser18 are cleaved as a signal peptide. Albumin domains follow at residues Arg19 to Thr210, Lys211 to Gln402, and Lys403 to Ser601. His22 lines the Cu(2+) pocket. Cystine bridges form between Cys99/Cys114, Cys113/Cys124, Cys148/Cys193, Cys192/Cys201, Cys224/Cys270, Cys269/Cys277, Cys289/Cys303, and Cys302/Cys313. A phosphoserine; by FAM20C mark is found at Ser111, Ser115, and Ser117. Asn251 carries an N-linked (GlcNAc...) asparagine glycan. Ser344 is subject to Phosphoserine; by FAM20C. Disulfide bonds link Cys384-Cys393, Cys416-Cys462, Cys461-Cys472, Cys485-Cys501, Cys500-Cys511, Cys538-Cys583, and Cys582-Cys591. A phosphoserine; by FAM20C mark is found at Ser444 and Ser445.

It belongs to the ALB/AFP/VDB family. Dimeric and trimeric forms have been found in addition to the monomeric form. In terms of processing, independent studies suggest heterogeneity of the N-terminal sequence of the mature protein and of the cleavage site of the signal sequence. Post-translationally, sulfated. In terms of tissue distribution, plasma. Synthesized by the fetal liver and yolk sac.

The protein localises to the secreted. In terms of biological role, binds copper, nickel, and fatty acids as well as, and bilirubin less well than, serum albumin. Only a small percentage (less than 2%) of the human AFP shows estrogen-binding properties. The chain is Alpha-fetoprotein (AFP) from Homo sapiens (Human).